Reading from the N-terminus, the 517-residue chain is Xaa-Pro dipeptidase (517 aa).

Mn(2+) is bound by residues Asp244, Asp255, His336, Glu381, and Glu420.

This sequence belongs to the peptidase M24B family. Bacterial-type prolidase subfamily. Monomer. The cofactor is Mn(2+).

It catalyses the reaction Xaa-L-Pro dipeptide + H2O = an L-alpha-amino acid + L-proline. The enzyme catalyses diisopropyl fluorophosphate + H2O = diisopropyl phosphate + fluoride + 2 H(+). The catalysed reaction is An aryl dialkyl phosphate + H2O = dialkyl phosphate + an aryl alcohol.. Functionally, splits dipeptides with a prolyl or hydroxyprolyl residue in the C-terminal position and a nonpolar amino acid at the N-terminal position. Also catalyzes the hydrolysis of toxic organophosphorus cholinesterase-inhibiting compounds including insecticide paraoxon and nerve gases such as diisopropylfluorophosphate (DFP), O-isopropyl methylphosphonofluoridate (sarin), O-pinacolyl methylphosphonofluoridate (soman), and O-cyclohexyl methylphosphonofluoridate. The sequence is that of Xaa-Pro dipeptidase (pepQ) from Alteromonas sp.